Consider the following 406-residue polypeptide: Cysteine desulfurase (406 aa).

Lys226 carries the N6-(pyridoxal phosphate)lysine modification. Cys364 acts as the Cysteine persulfide intermediate in catalysis.

This sequence belongs to the class-V pyridoxal-phosphate-dependent aminotransferase family. Csd subfamily. Homodimer. Interacts with SufE and the SufBCD complex composed of SufB, SufC and SufD. The interaction with SufE is required to mediate the direct transfer of the sulfur atom from the S-sulfanylcysteine. The cofactor is pyridoxal 5'-phosphate.

The protein localises to the cytoplasm. It catalyses the reaction (sulfur carrier)-H + L-cysteine = (sulfur carrier)-SH + L-alanine. It carries out the reaction L-selenocysteine + AH2 = hydrogenselenide + L-alanine + A + H(+). It functions in the pathway cofactor biosynthesis; iron-sulfur cluster biosynthesis. In terms of biological role, cysteine desulfurases mobilize the sulfur from L-cysteine to yield L-alanine, an essential step in sulfur metabolism for biosynthesis of a variety of sulfur-containing biomolecules. Component of the suf operon, which is activated and required under specific conditions such as oxidative stress and iron limitation. Acts as a potent selenocysteine lyase in vitro, that mobilizes selenium from L-selenocysteine. Selenocysteine lyase activity is however unsure in vivo. The protein is Cysteine desulfurase of Escherichia coli (strain K12 / MC4100 / BW2952).